Consider the following 875-residue polypeptide: Leucine--tRNA ligase (875 aa).

The short motif at 43–53 is the 'HIGH' region element; it reads PYPSGRIHMGH. The 'KMSKS' region signature appears at 633–637; it reads KMSKS. Lys636 contributes to the ATP binding site.

This sequence belongs to the class-I aminoacyl-tRNA synthetase family.

It localises to the cytoplasm. It carries out the reaction tRNA(Leu) + L-leucine + ATP = L-leucyl-tRNA(Leu) + AMP + diphosphate. The polypeptide is Leucine--tRNA ligase (Bartonella bacilliformis (strain ATCC 35685 / KC583 / Herrer 020/F12,63)).